The following is a 65-amino-acid chain: Weak neurotoxin 7 (65 aa).

5 cysteine pairs are disulfide-bonded: Cys3–Cys24, Cys6–Cys11, Cys17–Cys42, Cys46–Cys57, and Cys58–Cys63.

Belongs to the three-finger toxin family. Ancestral subfamily. Orphan group II sub-subfamily. In terms of tissue distribution, expressed by the venom gland.

The protein localises to the secreted. Its function is as follows. Binds with low affinity to muscular (alpha-1-beta-1-delta-epsilon/CHRNA1-CHRNB1-CHRND-CHRNE) and very low affinity to neuronal (alpha-7/CHRNA7) nicotinic acetylcholine receptor (nAChR). In Naja naja (Indian cobra), this protein is Weak neurotoxin 7.